The primary structure comprises 576 residues: 3-hydroxy-3-methylglutaryl coenzyme A reductase 1 (576 aa).

Positions methionine 1–arginine 35 are disordered. The next 2 helical transmembrane spans lie at alanine 42–alanine 62 and alanine 89–valine 109. The Charge relay system role is filled by glutamate 255. Residue asparagine 319 is glycosylated (N-linked (GlcNAc...) asparagine). Catalysis depends on charge relay system residues lysine 387 and aspartate 463. Residues leucine 532–isoleucine 552 form a helical membrane-spanning segment. Histidine 561 serves as the catalytic Proton donor. N-linked (GlcNAc...) asparagine glycosylation is present at asparagine 565.

This sequence belongs to the HMG-CoA reductase family. As to expression, expressed in trichomes, leaves, flowers, roots and stems.

Its subcellular location is the endoplasmic reticulum membrane. It is found in the plastid. The protein resides in the chloroplast membrane. It localises to the peroxisome membrane. It carries out the reaction (R)-mevalonate + 2 NADP(+) + CoA = (3S)-3-hydroxy-3-methylglutaryl-CoA + 2 NADPH + 2 H(+). It functions in the pathway metabolic intermediate biosynthesis; (R)-mevalonate biosynthesis; (R)-mevalonate from acetyl-CoA: step 3/3. Catalyzes the synthesis of mevalonate, the specific precursor of all isoprenoid compounds present in plants. Component of the triterpene saponins (e.g. ginsenosides or panaxosides) and phytosterols biosynthetic pathways. Promotes triterpenes accumulation in roots. This Cannabis sativa (Hemp) protein is 3-hydroxy-3-methylglutaryl coenzyme A reductase 1.